We begin with the raw amino-acid sequence, 431 residues long: Histidine--tRNA ligase (431 aa).

The protein belongs to the class-II aminoacyl-tRNA synthetase family. As to quaternary structure, homodimer.

It is found in the cytoplasm. The catalysed reaction is tRNA(His) + L-histidine + ATP = L-histidyl-tRNA(His) + AMP + diphosphate + H(+). This is Histidine--tRNA ligase from Neisseria gonorrhoeae (strain ATCC 700825 / FA 1090).